We begin with the raw amino-acid sequence, 455 residues long: Post-transcriptional regulator MTA (455 aa).

A disordered region spans residues 17–163; sequence DSVSSSEFDE…QVNCQRQDDD (147 aa). Positions 23–42 are enriched in acidic residues; sequence EFDESRDDETDAPTLEDEQL. A compositionally biased stretch (low complexity) spans 88-98; it reads SPLSRPRSPSP. 3 consecutive short sequence motifs (nuclear localization signal) follow at residues 101–107, 121–130, and 143–152; these read RYGKKIK, KRPRRRPRDR, and RAAPKRATRR. 4 residues coordinate Zn(2+): Cys-333, His-423, Cys-427, and Cys-432. The CHC2-type zinc-finger motif lies at 333–432; it reads CVFDKQSELA…HHSLCRNSEC (100 aa).

It belongs to the HHV-1 ICP27 protein family. As to quaternary structure, homodimer. Homodimerization is required for transactivation. Interacts with host ALYREF. Associates in a complex with RNA, and host export factors NXF1/TAP and ALYREF; these interactions allow nuclear export of viral transcripts. Interacts with protein K-bZIP/K8; this interaction promotes viral gene expression during lytic infection. Interacts with host PABPC1. Interacts with host AGO2 and TNRC6A; these interactions inhibit host P-body formation. Interacts with PRKRA and EIF2AK2/PKR; these interactions inhibit host stress granule formation. Proteolytically cleaved by host caspase-7 (CASP7), leading to its inactivation, thereby preventing expression of viral lytic genes.

The protein resides in the host cytoplasm. Its subcellular location is the host nucleus. Functionally, post-transcriptional regulator that plays an essential role in the expression of viral lytic genes and productive viral replication. Possesses numerous activities that promote the expression of viral genes including enhancement of RNA stability, promotion of RNA splicing and stimulation of protein translation often via its ability to interact with different cellular cofactors. Stabilizes polyadenylated nuclear (PAN) RNA by cooperative binding to a 9-nt core of the MRE (MTA responsive element) together with host PABPC1. Functions as a viral splicing factor and promotes expression of intron-containing viral lytic genes. Protects viral transcripts from specific nuclear RNA decay pathways by preventing host MTREX recruitment that promotes unwinding and degradation of structured RNA substrates. Plays a role in the inhibition of host P-body formation by altering the scaffolding activity of TNRC6A at the initial stage thereby enhancing virus production. Also inhibits host stress granule formation by blocking autophosphorylation of EIF2AK2/PKR and its subsequent binding to dsRNA. This is Post-transcriptional regulator MTA from Human herpesvirus 8 type P (isolate GK18) (HHV-8).